Reading from the N-terminus, the 292-residue chain is MIAGSMVALVTPMDAQGGLDWEALSKLVDFHLQEGTNAIVAVGTTGESATLDVGEHIEVIKRVVDQVAGRIPVIAGTGGNSTRESVELTRAAKEVGADACLLVTPYYNKPTQEGLYLHFRHIAEAVAIPQILYNVPGRTVCDMLPETVERLSKIDNIIGIKEATGDLQRAQEVLDRVSKDFLVYSGDDATAVELMLLGGKGNISVTANVAPRAMSDLCAAAMRGEAAIARAINDRLMPLHKALFLESNPIPVKWALHEMGLMGDGIRLPLTWLSPRCHEPLRQAMRQCGVLA.

A pyruvate-binding site is contributed by threonine 45. Residue tyrosine 133 is the Proton donor/acceptor of the active site. The active-site Schiff-base intermediate with substrate is lysine 161. Isoleucine 203 provides a ligand contact to pyruvate.

It belongs to the DapA family. As to quaternary structure, homodimer.

Its subcellular location is the cytoplasm. It carries out the reaction L-aspartate 4-semialdehyde + pyruvate = (2S,4S)-4-hydroxy-2,3,4,5-tetrahydrodipicolinate + H2O + H(+). It participates in amino-acid biosynthesis; L-lysine biosynthesis via DAP pathway; (S)-tetrahydrodipicolinate from L-aspartate: step 3/4. Its function is as follows. Catalyzes the condensation of (S)-aspartate-beta-semialdehyde [(S)-ASA] and pyruvate to 4-hydroxy-tetrahydrodipicolinate (HTPA). The polypeptide is 4-hydroxy-tetrahydrodipicolinate synthase (Ectopseudomonas mendocina (strain ymp) (Pseudomonas mendocina)).